The sequence spans 194 residues: Protein GrpE (194 aa).

Residues Met-1–Pro-12 are compositionally biased toward basic and acidic residues. The disordered stretch occupies residues Met-1–Val-44.

Belongs to the GrpE family. Homodimer.

Its subcellular location is the cytoplasm. In terms of biological role, participates actively in the response to hyperosmotic and heat shock by preventing the aggregation of stress-denatured proteins, in association with DnaK and GrpE. It is the nucleotide exchange factor for DnaK and may function as a thermosensor. Unfolded proteins bind initially to DnaJ; upon interaction with the DnaJ-bound protein, DnaK hydrolyzes its bound ATP, resulting in the formation of a stable complex. GrpE releases ADP from DnaK; ATP binding to DnaK triggers the release of the substrate protein, thus completing the reaction cycle. Several rounds of ATP-dependent interactions between DnaJ, DnaK and GrpE are required for fully efficient folding. The chain is Protein GrpE from Porphyromonas gingivalis (strain ATCC BAA-308 / W83).